The sequence spans 505 residues: L-carnitine/gamma-butyrobetaine antiporter (505 aa).

12 consecutive transmembrane segments (helical) span residues 10 to 30 (IEPKVFFPPLIIVGILCWLTV), 50 to 70 (IWGWAFEWYMVVMLFGWFWLV), 92 to 112 (IFMMFASCTSAAVLFWGSIEI), 143 to 163 (GPLPWATYSFLSVAFAYFFFV), 195 to 215 (FYLVALIFAMGTSLGLATPLV), 231 to 251 (LDAIIITCWIVLNAICVACGL), 263 to 283 (SYLSFLMLGWVFIVSGASFIM), 316 to 336 (WTVFYWAWWVIYAIQMSIFLA), 347 to 367 (LCFGMVLGLTASTWILWTVLG), 403 to 423 (FSTATMWGFFILCFIATVTLI), 446 to 466 (LLVRIGWSVLVGVIGIVLLAL), and 475 to 495 (AIIAGGCPLFFVNIMVTLSFI).

Belongs to the BCCT transporter (TC 2.A.15) family. CaiT subfamily. As to quaternary structure, homotrimer.

Its subcellular location is the cell inner membrane. The catalysed reaction is 4-(trimethylamino)butanoate(in) + (R)-carnitine(out) = 4-(trimethylamino)butanoate(out) + (R)-carnitine(in). It functions in the pathway amine and polyamine metabolism; carnitine metabolism. In terms of biological role, catalyzes the exchange of L-carnitine for gamma-butyrobetaine. The chain is L-carnitine/gamma-butyrobetaine antiporter from Citrobacter koseri (strain ATCC BAA-895 / CDC 4225-83 / SGSC4696).